Reading from the N-terminus, the 215-residue chain is CASP-like protein 1U3 (215 aa).

Residues 1-13 (MHDEEKKEPKWVT) lie on the Cytoplasmic side of the membrane. The helical transmembrane segment at 14 to 34 (AVSIAGRIAGMGLAVAAAVLM) threads the bilayer. Residues 35-68 (STASQCTVYYAAPAASAYGGAARARTVTYSDFPP) are Extracellular-facing. A helical membrane pass occupies residues 69–89 (FVFLVGAASIAAFLEAIAIFL). Over 90–105 (VVWKKGKDKTTKVLMP) the chain is Cytoplasmic. Residues 106–126 (LLGVAVPALLYSATGAAFAAV) traverse the membrane as a helical segment. At 127–161 (SDMSYCSANGKRVSICAGSAAAGGGVSGGTNFCSQ) the chain is on the extracellular side. Residues 162–182 (VHIAVYLSLAAAVAVSVAEVV) traverse the membrane as a helical segment. Residues 183–215 (RGLGGSASGGGSDSDSSSSSESGGCDHGCHHKH) lie on the Cytoplasmic side of the membrane. The disordered stretch occupies residues 187-215 (GSASGGGSDSDSSSSSESGGCDHGCHHKH). Low complexity predominate over residues 195-205 (DSDSSSSSESG).

It belongs to the Casparian strip membrane proteins (CASP) family. As to quaternary structure, homodimer and heterodimers.

It is found in the cell membrane. In Sorghum bicolor (Sorghum), this protein is CASP-like protein 1U3.